The chain runs to 671 residues: DNA ligase (671 aa).

NAD(+)-binding positions include 32–36 (DAEYD), 81–82 (SL), and glutamate 113. Catalysis depends on lysine 115, which acts as the N6-AMP-lysine intermediate. 4 residues coordinate NAD(+): arginine 136, glutamate 173, lysine 290, and lysine 314. Zn(2+)-binding residues include cysteine 408, cysteine 411, cysteine 426, and cysteine 432. The 79-residue stretch at 593-671 (EIDSPFAGKT…ETEMLRLLGS (79 aa)) folds into the BRCT domain.

Belongs to the NAD-dependent DNA ligase family. LigA subfamily. The cofactor is Mg(2+). Mn(2+) is required as a cofactor.

The enzyme catalyses NAD(+) + (deoxyribonucleotide)n-3'-hydroxyl + 5'-phospho-(deoxyribonucleotide)m = (deoxyribonucleotide)n+m + AMP + beta-nicotinamide D-nucleotide.. Its function is as follows. DNA ligase that catalyzes the formation of phosphodiester linkages between 5'-phosphoryl and 3'-hydroxyl groups in double-stranded DNA using NAD as a coenzyme and as the energy source for the reaction. It is essential for DNA replication and repair of damaged DNA. This is DNA ligase from Escherichia coli O1:K1 / APEC.